Consider the following 482-residue polypeptide: uncharacterized protein (482 aa).

The DWNN domain occupies I5–P79. The segment at G86–R108 is disordered. The segment at Y183 to T200 adopts a CCHC-type zinc-finger fold. Residues C282 to H322 form an RING-type; degenerate zinc finger. 2 disordered regions span residues K346–V393 and Q447–N482. The span at N451–S466 shows a compositional bias: low complexity.

The protein resides in the nucleus. This is an uncharacterized protein from Schizosaccharomyces pombe (strain 972 / ATCC 24843) (Fission yeast).